We begin with the raw amino-acid sequence, 154 residues long: RING finger protein 11 (154 aa).

The span at 1–12 (MGNCLKSPTSDD) shows a compositional bias: polar residues. Positions 1–53 (MGNCLKSPTSDDISLLHESQSDRASFGEGTEPDQEPPPPYQEQVPVPVYHPTP) are disordered. Residue Gly2 is the site of N-myristoyl glycine attachment. The S-palmitoyl cysteine moiety is linked to residue Cys4. Phosphoserine occurs at positions 14 and 25. The PPxY motif signature appears at 37-40 (PPPY). Low complexity predominate over residues 41–51 (QEQVPVPVYHP). The segment at 99–140 (CVICMMDFVYGDPIRFLPCMHIYHLDCIDDWLMRSFTCPSCM) adopts an RING-type zinc-finger fold. Residue Thr135 is modified to Phosphothreonine; by PKB/AKT1.

Interacts (when phosphorylated) with 14-3-3. Interacts with the E3 ubiquitin-ligases NEDD4, ITCH, SMURF2 and WWP1. Also interacts with the E2 ubiquitin-conjugating enzymes UBE2D1 and UBE2N, but neither with CDC34, nor with UBE2L3. Interacts with ZNF350, EPS15 and STAMBP. After TNF stimulation, interacts with TAX1BP1, TNFAIP3 and RIPK1; these interactions are transient and they are lost after 1 hour of stimulation with TNF. Interacts with GGA1. In terms of processing, ubiquitinated in the presence of ITCH, SMURF2 and UBE2D1, as well as WWP1. Post-translationally, phosphorylation by PKB/AKT1 may accelerate degradation by the proteasome. Acylation at both Gly-2 and Cys-4 is required for proper localization to the endosomes.

The protein localises to the early endosome. It is found in the recycling endosome. It localises to the cytoplasm. The protein resides in the nucleus. Essential component of a ubiquitin-editing protein complex, comprising also TNFAIP3, ITCH and TAX1BP1, that ensures the transient nature of inflammatory signaling pathways. Promotes the association of TNFAIP3 to RIPK1 after TNF stimulation. TNFAIP3 deubiquitinates 'Lys-63' polyubiquitin chains on RIPK1 and catalyzes the formation of 'Lys-48'-polyubiquitin chains. This leads to RIPK1 proteasomal degradation and consequently termination of the TNF- or LPS-mediated activation of NF-kappa-B. Recruits STAMBP to the E3 ubiquitin-ligase SMURF2 for ubiquitination, leading to its degradation by the 26S proteasome. In Bos taurus (Bovine), this protein is RING finger protein 11 (RNF11).